Here is a 404-residue protein sequence, read N- to C-terminus: Probable glucan endo-1,6-beta-glucosidase B (404 aa).

Positions 1–20 (MTTYQTLFLIPLAISTLVTA) are cleaved as a signal peptide. Residues Asn-33 and Asn-130 are each glycosylated (N-linked (GlcNAc...) asparagine). Glu-222 serves as the catalytic Proton donor. Asn-253 and Asn-299 each carry an N-linked (GlcNAc...) asparagine glycan. Glu-324 serves as the catalytic Nucleophile.

It belongs to the glycosyl hydrolase 5 (cellulase A) family.

The protein localises to the secreted. The catalysed reaction is Random hydrolysis of (1-&gt;6)-linkages in (1-&gt;6)-beta-D-glucans.. Functionally, beta-glucanases participate in the metabolism of beta-glucan, the main structural component of the cell wall. Acts on lutean, pustulan and 1,6-oligo-beta-D-glucosides. In Aspergillus terreus (strain NIH 2624 / FGSC A1156), this protein is Probable glucan endo-1,6-beta-glucosidase B (exgB).